Consider the following 354-residue polypeptide: Fe(3+) ions import ATP-binding protein FbpC (354 aa).

Residues 4–236 form the ABC transporter domain; the sequence is LELHAVHKSF…PRDAQTALFL (233 aa). 36–43 provides a ligand contact to ATP; sequence GPSGSGKT.

Belongs to the ABC transporter superfamily. Fe(3+) ion importer (TC 3.A.1.10) family. As to quaternary structure, the complex is composed of two ATP-binding proteins (FbpC), two transmembrane proteins (FbpB) and a solute-binding protein (FbpA).

Its subcellular location is the cell inner membrane. The enzyme catalyses Fe(3+)(out) + ATP + H2O = Fe(3+)(in) + ADP + phosphate + H(+). Its function is as follows. Part of the ABC transporter complex FbpABC involved in Fe(3+) ions import. Responsible for energy coupling to the transport system. In Pseudomonas fluorescens (strain ATCC BAA-477 / NRRL B-23932 / Pf-5), this protein is Fe(3+) ions import ATP-binding protein FbpC.